We begin with the raw amino-acid sequence, 203 residues long: Large ribosomal subunit protein bL25 (203 aa).

It belongs to the bacterial ribosomal protein bL25 family. CTC subfamily. In terms of assembly, part of the 50S ribosomal subunit; part of the 5S rRNA/L5/L18/L25 subcomplex. Contacts the 5S rRNA. Binds to the 5S rRNA independently of L5 and L18.

In terms of biological role, this is one of the proteins that binds to the 5S RNA in the ribosome where it forms part of the central protuberance. This Rickettsia typhi (strain ATCC VR-144 / Wilmington) protein is Large ribosomal subunit protein bL25.